We begin with the raw amino-acid sequence, 388 residues long: Chorismate synthase (388 aa).

Residues Arg-39 and Arg-45 each contribute to the NADP(+) site. The tract at residues 95-118 (EKNEKSRRVSRPRPGHADLVGGMK) is disordered. FMN-binding positions include 130 to 132 (RSS), 251 to 252 (NA), Gly-296, 311 to 315 (KPIPT), and Arg-337.

Belongs to the chorismate synthase family. As to quaternary structure, homotetramer. FMNH2 serves as cofactor.

The enzyme catalyses 5-O-(1-carboxyvinyl)-3-phosphoshikimate = chorismate + phosphate. It participates in metabolic intermediate biosynthesis; chorismate biosynthesis; chorismate from D-erythrose 4-phosphate and phosphoenolpyruvate: step 7/7. Its function is as follows. Catalyzes the anti-1,4-elimination of the C-3 phosphate and the C-6 proR hydrogen from 5-enolpyruvylshikimate-3-phosphate (EPSP) to yield chorismate, which is the branch point compound that serves as the starting substrate for the three terminal pathways of aromatic amino acid biosynthesis. This reaction introduces a second double bond into the aromatic ring system. The protein is Chorismate synthase of Listeria innocua serovar 6a (strain ATCC BAA-680 / CLIP 11262).